Reading from the N-terminus, the 392-residue chain is General receptor for phosphoinositides 1-associated scaffold protein (392 aa).

Residues 1-50 form a disordered region; it reads MTLRRLRKLQQKEEATAAPDPAGRAPDSEAARAAPLPSGPPAAAAPPGAP. The span at 37–49 shows a compositional bias: pro residues; the sequence is PSGPPAAAAPPGA. T76 is modified (phosphothreonine). S93 is modified (phosphoserine). A PDZ domain is found at 100–189; it reads VLTLEKGDNQ…VLRLETLYGT (90 aa). The interaction with PSCD3 stretch occupies residues 180–257; that stretch reads VLRLETLYGT…GAGLLPGSLP (78 aa). Y236 is subject to Phosphotyrosine. Position 269 is an omega-N-methylarginine (R269). The segment at 294–315 is disordered; the sequence is PQALPPPPPPARALGPSSAETP. S384 carries the post-translational modification Phosphoserine.

As to quaternary structure, heteromer. Composed of TAMALIN, CYTH2 and at least one GRM1. Also interacts with GRM2, GRM3 and GRM5. Interacts with CYTH3. In terms of tissue distribution, highly expressed in brain, heart and lung, and to a lower extent in embryo, kidney and ovary.

It is found in the cytoplasm. The protein resides in the perinuclear region. The protein localises to the cell membrane. It localises to the postsynaptic cell membrane. Its function is as follows. Plays a role in intracellular trafficking and contributes to the macromolecular organization of group 1 metabotropic glutamate receptors (mGluRs) at synapses. The sequence is that of General receptor for phosphoinositides 1-associated scaffold protein from Mus musculus (Mouse).